The sequence spans 179 residues: Bifunctional protein PyrR (179 aa).

Positions 100–112 (VILVDDVLFTGRT) match the PRPP-binding motif.

It belongs to the purine/pyrimidine phosphoribosyltransferase family. PyrR subfamily. Homodimer and homohexamer; in equilibrium.

The catalysed reaction is UMP + diphosphate = 5-phospho-alpha-D-ribose 1-diphosphate + uracil. Regulates transcriptional attenuation of the pyrimidine nucleotide (pyr) operon by binding in a uridine-dependent manner to specific sites on pyr mRNA. This disrupts an antiterminator hairpin in the RNA and favors formation of a downstream transcription terminator, leading to a reduced expression of downstream genes. Functionally, also displays a weak uracil phosphoribosyltransferase activity which is not physiologically significant. The polypeptide is Bifunctional protein PyrR (Geobacillus thermodenitrificans (strain NG80-2)).